The following is an 812-amino-acid chain: 5-methyltetrahydropteroyltriglutamate--homocysteine methyltransferase 3, chloroplastic (812 aa).

A chloroplast-targeting transit peptide spans 1 to 33 (MGQLALQRLQPLASLPRRPPSLPPPSSATPSLP). The interval 13–33 (ASLPRRPPSLPPPSSATPSLP) is disordered. Pro residues predominate over residues 17–27 (RRPPSLPPPSS). Lysine 66 and asparagine 164 together coordinate 5-methyltetrahydropteroyltri-L-glutamate. A disordered region spans residues 430–456 (MRQASRRSSPRVTNAAVQQDVDAVKKS). L-homocysteine contacts are provided by residues 485 to 487 (IGS) and glutamate 538. L-methionine-binding positions include 485–487 (IGS) and glutamate 538. Residues aspartate 543, tyrosine 566, 569–570 (RC), and tryptophan 615 each bind 5-methyltetrahydropteroyltri-L-glutamate. Aspartate 653 lines the L-homocysteine pocket. Aspartate 653 provides a ligand contact to L-methionine. Residues histidine 695, cysteine 697, histidine 706, aspartate 710, and glutamate 719 each coordinate Zn(2+). Histidine 749 functions as the Proton donor in the catalytic mechanism. Cysteine 781 serves as a coordination point for Zn(2+).

It belongs to the vitamin-B12 independent methionine synthase family. It depends on Zn(2+) as a cofactor. As to expression, expressed in seeds.

Its subcellular location is the plastid. The protein resides in the chloroplast. The enzyme catalyses 5-methyltetrahydropteroyltri-L-glutamate + L-homocysteine = tetrahydropteroyltri-L-glutamate + L-methionine. The protein operates within amino-acid biosynthesis; L-methionine biosynthesis via de novo pathway; L-methionine from L-homocysteine (MetE route): step 1/1. Its function is as follows. Catalyzes the transfer of a methyl group from 5-methyltetrahydrofolate to homocysteine resulting in methionine formation. The protein is 5-methyltetrahydropteroyltriglutamate--homocysteine methyltransferase 3, chloroplastic (MS3) of Arabidopsis thaliana (Mouse-ear cress).